We begin with the raw amino-acid sequence, 2168 residues long: Genome polyprotein (2168 aa).

The interval 1-20 (MGMQMSKNTAGSHTTVTQAS) is disordered. The N-myristoyl glycine; by host moiety is linked to residue Gly2. At 2–1479 (GMQMSKNTAG…NVSIATTILS (1478 aa)) the chain is on the cytoplasmic side. Amphipathic alpha-helix stretches follow at residues 551-567 (ALQA…ISSV) and 554-575 (APVE…TAQD). A compositionally biased stretch (polar residues) spans 576–589 (TQPSSHNISTSETP). The tract at residues 576–607 (TQPSSHNISTSETPALQAAETGASSNASDEGM) is disordered. Residues His856 and Asp874 each act as for protease 2A activity in the active site. Zn(2+) is bound by residues Cys891 and Cys893. Cys945 serves as the catalytic For protease 2A activity. Residues Cys951 and His953 each contribute to the Zn(2+) site. A membrane-binding region spans residues 1085–1157 (GDDWLKKFTS…EHSCPTTEQQ (73 aa)). An oligomerization region spans residues 1085–1223 (GDDWLKKFTS…TAGTGKSLAT (139 aa)). The segment at 1106–1110 (AEKIM) is RNA-binding. The region spanning 1189–1347 (EKRILGYIQF…YKTHNGTLDV (159 aa)) is the SF3 helicase domain. Zn(2+)-binding residues include Cys1354, Cys1365, and Cys1370. The C4-type; degenerate zinc-finger motif lies at 1354–1370 (CEDCCPANFKTCMPLIC). Positions 1397–1404 (EWKRRNQV) are RNA-binding. The segment at 1408 to 1413 (YVRLFQ) is oligomerization. The stretch at 1480-1495 (SLVLLTSVITLVYLVY) is an intramembrane region. The Cytoplasmic segment spans residues 1496-2168 (RLFAGYQGPY…SLLREWYEKF (673 aa)). Tyr1505 carries the post-translational modification O-(5'-phospho-RNA)-tyrosine. The Peptidase C3 domain maps to 1525–1703 (GPLMDFGVGM…FCAALKRSYF (179 aa)). Active-site for protease 3C activity residues include His1564, Glu1595, and Cys1671. The RdRp catalytic domain maps to 1934-2048 (GELFGFDYTA…ASYPYRIDPA (115 aa)). Mg(2+)-binding residues include Asp1940 and Asp2035.

It belongs to the picornaviruses polyprotein family. Interacts with capsid protein VP1 and capsid protein VP3 to form heterotrimeric protomers. As to quaternary structure, interacts with capsid protein VP0, and capsid protein VP3 to form heterotrimeric protomers. Five protomers subsequently associate to form pentamers which serve as building blocks for the capsid. Interacts with capsid protein VP2, capsid protein VP3 and capsid protein VP4 following cleavage of capsid protein VP0. In terms of assembly, interacts with capsid protein VP1 and capsid protein VP3 in the mature capsid. Interacts with capsid protein VP0 and capsid protein VP1 to form heterotrimeric protomers. Five protomers subsequently associate to form pentamers which serve as building blocks for the capsid. Interacts with capsid protein VP4 in the mature capsid. Interacts with protein 2C; this interaction may be important for virion morphogenesis. As to quaternary structure, interacts with capsid protein VP1 and capsid protein VP3. In terms of assembly, homodimer. Homohexamer; forms a hexameric ring structure with 6-fold symmetry characteristic of AAA+ ATPases. Interacts (via N-terminus) with host RTN3 (via reticulon domain); this interaction is important for viral replication. Interacts with capsid protein VP3; this interaction may be important for virion morphogenesis. As to quaternary structure, interacts with protein 3CD. In terms of assembly, homodimer. Interacts with host GBF1. Interacts (via GOLD domain) with host ACBD3 (via GOLD domain); this interaction allows the formation of a viral protein 3A/ACBD3 heterotetramer with a 2:2 stoichiometry, which will stimulate the recruitment of host PI4KB in order to synthesize PI4P at the viral RNA replication sites. Interacts with RNA-directed RNA polymerase. As to quaternary structure, interacts with protein 3AB and with RNA-directed RNA polymerase. In terms of assembly, interacts with Viral protein genome-linked and with protein 3CD. Mg(2+) is required as a cofactor. Specific enzymatic cleavages in vivo by the viral proteases yield processing intermediates and the mature proteins. Post-translationally, myristoylation is required for the formation of pentamers during virus assembly. Further assembly of 12 pentamers and a molecule of genomic RNA generates the provirion. In terms of processing, during virion maturation, immature virions are rendered infectious following cleavage of VP0 into VP4 and VP2. This maturation seems to be an autocatalytic event triggered by the presence of RNA in the capsid and it is followed by a conformational change infectious virion. Myristoylation is required during RNA encapsidation and formation of the mature virus particle. Post-translationally, VPg is uridylylated by the polymerase into VPg-pUpU. This acts as a nucleotide-peptide primer for the genomic RNA replication.

It localises to the virion. It is found in the host cytoplasm. The protein localises to the host cytoplasmic vesicle membrane. Its subcellular location is the host nucleus. It catalyses the reaction a ribonucleoside 5'-triphosphate + H2O = a ribonucleoside 5'-diphosphate + phosphate + H(+). The catalysed reaction is Selective cleavage of Tyr-|-Gly bond in the picornavirus polyprotein.. The enzyme catalyses RNA(n) + a ribonucleoside 5'-triphosphate = RNA(n+1) + diphosphate. It carries out the reaction Selective cleavage of Gln-|-Gly bond in the poliovirus polyprotein. In other picornavirus reactions Glu may be substituted for Gln, and Ser or Thr for Gly.. Its activity is regulated as follows. Replication or transcription is subject to high level of random mutations by the nucleotide analog ribavirin. In terms of biological role, forms an icosahedral capsid of pseudo T=3 symmetry with capsid proteins VP2 and VP3. The capsid is 300 Angstroms in diameter, composed of 60 copies of each capsid protein and enclosing the viral positive strand RNA genome. Capsid protein VP1 mainly forms the vertices of the capsid. Capsid protein VP1 interacts with host cell receptor to provide virion attachment to target host cells. This attachment induces virion internalization. Tyrosine kinases are probably involved in the entry process. After binding to its receptor, the capsid undergoes conformational changes. Capsid protein VP1 N-terminus (that contains an amphipathic alpha-helix) and capsid protein VP4 are externalized. Together, they shape a pore in the host membrane through which viral genome is translocated to host cell cytoplasm. Forms an icosahedral capsid of pseudo T=3 symmetry with capsid proteins VP2 and VP3. The capsid is 300 Angstroms in diameter, composed of 60 copies of each capsid protein and enclosing the viral positive strand RNA genome. Its function is as follows. Lies on the inner surface of the capsid shell. After binding to the host receptor, the capsid undergoes conformational changes. Capsid protein VP4 is released, Capsid protein VP1 N-terminus is externalized, and together, they shape a pore in the host membrane through which the viral genome is translocated into the host cell cytoplasm. Functionally, component of immature procapsids, which is cleaved into capsid proteins VP4 and VP2 after maturation. Allows the capsid to remain inactive before the maturation step. In terms of biological role, cysteine protease that cleaves viral polyprotein and specific host proteins. It is responsible for the autocatalytic cleavage between the P1 and P2 regions, which is the first cleavage occurring in the polyprotein. Also cleaves the host translation initiation factor EIF4G1, in order to shut down the capped cellular mRNA translation. Inhibits the host nucleus-cytoplasm protein and RNA trafficking by cleaving host members of the nuclear pores. Counteracts stress granule formation probably by antagonizing its assembly or promoting its dissassembly. Plays an essential role in the virus replication cycle by acting as a viroporin. Creates a pore in the host endoplasmic reticulum and as a consequence releases Ca2+ in the cytoplasm of infected cell. In turn, high levels of cytoplasmic calcium may trigger membrane trafficking and transport of viral ER-associated proteins to viroplasms, sites of viral genome replication. Its function is as follows. Induces and associates with structural rearrangements of intracellular membranes. Displays RNA-binding, nucleotide binding and NTPase activities. May play a role in virion morphogenesis and viral RNA encapsidation by interacting with the capsid protein VP3. Functionally, localizes the viral replication complex to the surface of membranous vesicles. Together with protein 3CD binds the Cis-Active RNA Element (CRE) which is involved in RNA synthesis initiation. Acts as a cofactor to stimulate the activity of 3D polymerase, maybe through a nucleid acid chaperone activity. In terms of biological role, localizes the viral replication complex to the surface of membranous vesicles. It inhibits host cell endoplasmic reticulum-to-Golgi apparatus transport and causes the disassembly of the Golgi complex, possibly through GBF1 interaction. This would result in depletion of MHC, trail receptors and IFN receptors at the host cell surface. Plays an essential role in viral RNA replication by recruiting ACBD3 and PI4KB at the viral replication sites, thereby allowing the formation of the rearranged membranous structures where viral replication takes place. Acts as a primer for viral RNA replication and remains covalently bound to viral genomic RNA. VPg is uridylylated prior to priming replication into VPg-pUpU. The oriI viral genomic sequence may act as a template for this. The VPg-pUpU is then used as primer on the genomic RNA poly(A) by the RNA-dependent RNA polymerase to replicate the viral genome. During genome replication, the VPg-RNA linkage is removed by the host TDP2, thereby accelerating replication. During the late stage of the replication cycle, host TDP2 is excluded from sites of viral RNA synthesis and encapsidation, allowing for the generation of progeny virions. Its function is as follows. Involved in the viral replication complex and viral polypeptide maturation. It exhibits protease activity with a specificity and catalytic efficiency that is different from protease 3C. Protein 3CD lacks polymerase activity. Protein 3CD binds to the 5'UTR of the viral genome. Functionally, replicates the viral genomic RNA on the surface of intracellular membranes. May form linear arrays of subunits that propagate along a strong head-to-tail interaction called interface-I. Covalently attaches UMP to a tyrosine of VPg, which is used to prime RNA synthesis. The positive stranded RNA genome is first replicated at virus induced membranous vesicles, creating a dsRNA genomic replication form. This dsRNA is then used as template to synthesize positive stranded RNA genomes. ss(+)RNA genomes are either translated, replicated or encapsidated. In terms of biological role, major viral protease that mediates proteolytic processing of the polyprotein. Cleaves host EIF5B, contributing to host translation shutoff. Also cleaves host PABPC1, contributing to host translation shutoff. Cleaves host NLRP1, triggers host N-glycine-mediated degradation of the autoinhibitory NLRP1 N-terminal fragment. The sequence is that of Genome polyprotein from Sus scrofa (Pig).